The primary structure comprises 118 residues: Eukaryotic translation initiation factor 4E-binding protein 1 (118 aa).

Ser-2 is modified (N-acetylserine). The disordered stretch occupies residues 27-48; that stretch reads VQLPPGDYSTTPGGTLFSTTPG. Positions 34-48 are enriched in polar residues; the sequence is YSTTPGGTLFSTTPG. The residue at position 37 (Thr-37) is a Phosphothreonine; by MTOR. Thr-41 carries the post-translational modification Phosphothreonine. Ser-44 bears the Phosphoserine mark. Residue Thr-46 is modified to Phosphothreonine; by MTOR. Thr-50 bears the Phosphothreonine mark. Tyr-54 carries the phosphotyrosine modification. The YXXXXLphi motif signature appears at 54–60; the sequence is YDRKFLM. Lys-57 participates in a covalent cross-link: Glycyl lysine isopeptide (Lys-Gly) (interchain with G-Cter in ubiquitin). A disordered region spans residues 64-118; that stretch reads NSPVTKTPPRDLPTIPGVTSPTGDEPPTEARQNHLRSSPEDKPAGGEESQFEMDI. The residue at position 65 (Ser-65) is a Phosphoserine; by DYRK2, MAPK1, MAPK3 and MTOR. The residue at position 70 (Thr-70) is a Phosphothreonine; by MTOR. Residue Thr-77 is modified to Phosphothreonine. A phosphoserine mark is found at Ser-83 and Ser-100. A Phosphoserine; by DYRK2 modification is found at Ser-101. A Phosphoserine modification is found at Ser-112. A TOS motif motif is present at residues 114–118; sequence FEMDI.

The protein belongs to the eIF4E-binding protein family. Hypophosphorylated EIF4EBP1 competes with EIF4G1/EIF4G3 to interact with EIF4E; insulin stimulated MAP-kinase (MAPK1 and MAPK3) or mTORC1 phosphorylation of EIF4EBP1 causes dissociation of the complex allowing EIF4G1/EIF4G3 to bind and consequent initiation of translation. Interacts (via TOS motif) with RPTOR; promoting phosphorylation by mTORC1. In terms of processing, phosphorylated on serine and threonine residues in response to insulin, EGF and PDGF. Phosphorylation at Thr-37, Thr-46, Ser-65 and Thr-70, corresponding to the hyperphosphorylated form, is regulated by mTORC1 and abolishes binding to EIF4E. Post-translationally, ubiquitinated: when eIF4E levels are low, hypophosphorylated form is ubiquitinated by the BCR(KLHL25) complex, leading to its degradation and serving as a homeostatic mechanism to maintain translation and prevent eIF4E inhibition when eIF4E levels are low. Not ubiquitinated when hyperphosphorylated (at Thr-37, Thr-46, Ser-65 and Thr-70) or associated with eIF4E.

Its subcellular location is the cytoplasm. It is found in the nucleus. Its function is as follows. Repressor of translation initiation that regulates EIF4E activity by preventing its assembly into the eIF4F complex: hypophosphorylated form competes with EIF4G1/EIF4G3 and strongly binds to EIF4E, leading to repress translation. In contrast, hyperphosphorylated form dissociates from EIF4E, allowing interaction between EIF4G1/EIF4G3 and EIF4E, leading to initiation of translation. Mediates the regulation of protein translation by hormones, growth factors and other stimuli that signal through the MAP kinase and mTORC1 pathways. This Bos taurus (Bovine) protein is Eukaryotic translation initiation factor 4E-binding protein 1 (EIF4EBP1).